The sequence spans 436 residues: CaM kinase-like vesicle-associated protein (436 aa).

The Protein kinase domain occupies 24-286; sequence YDLGQIVKSE…AQEAINHEWI (263 aa). A disordered region spans residues 328-436; sequence APENQTAAAT…ALDTVEEQSG (109 aa). Low complexity predominate over residues 333 to 409; that stretch reads TAAATAPAAE…QPPAEPVVHV (77 aa).

The protein belongs to the protein kinase superfamily. CAMK Ser/Thr protein kinase family. In terms of assembly, interacts with calmodulin, in the presence of calcium. It depends on Ca(2+) as a cofactor.

The protein localises to the cytoplasmic vesicle membrane. Its function is as follows. Does not appear to have detectable kinase activity. The polypeptide is CaM kinase-like vesicle-associated protein (camkv) (Danio rerio (Zebrafish)).